A 198-amino-acid polypeptide reads, in one-letter code: dTTP/UTP pyrophosphatase (198 aa).

Asp-76 serves as the catalytic Proton acceptor.

This sequence belongs to the Maf family. YhdE subfamily. The cofactor is a divalent metal cation.

It is found in the cytoplasm. The catalysed reaction is dTTP + H2O = dTMP + diphosphate + H(+). It catalyses the reaction UTP + H2O = UMP + diphosphate + H(+). Functionally, nucleoside triphosphate pyrophosphatase that hydrolyzes dTTP and UTP. May have a dual role in cell division arrest and in preventing the incorporation of modified nucleotides into cellular nucleic acids. The polypeptide is dTTP/UTP pyrophosphatase (Shewanella denitrificans (strain OS217 / ATCC BAA-1090 / DSM 15013)).